The following is a 592-amino-acid chain: Arginine--tRNA ligase (592 aa).

The 'HIGH' region signature appears at 139–149 (ANPNGPLHIGH).

Belongs to the class-I aminoacyl-tRNA synthetase family.

The protein resides in the cytoplasm. The enzyme catalyses tRNA(Arg) + L-arginine + ATP = L-arginyl-tRNA(Arg) + AMP + diphosphate. The polypeptide is Arginine--tRNA ligase (Methanopyrus kandleri (strain AV19 / DSM 6324 / JCM 9639 / NBRC 100938)).